Reading from the N-terminus, the 88-residue chain is UPF0297 protein Cphy_2298 (88 aa).

Belongs to the UPF0297 family.

The sequence is that of UPF0297 protein Cphy_2298 from Lachnoclostridium phytofermentans (strain ATCC 700394 / DSM 18823 / ISDg) (Clostridium phytofermentans).